Here is a 689-residue protein sequence, read N- to C-terminus: Zinc finger protein 185 (689 aa).

2 disordered regions span residues 1 to 253 (MSIS…GRTK) and 298 to 534 (APDV…SCTS). Basic and acidic residues predominate over residues 35 to 52 (LKGDKSWITKQDESEGRT). Ser-66 carries the phosphoserine modification. A compositionally biased stretch (polar residues) spans 95–114 (IDSSSQPQQQFPKANGTPKS). Ser-153 carries the post-translational modification Phosphoserine. The segment covering 157 to 166 (DTEEEEEEEV) has biased composition (acidic residues). Pro-206 carries the post-translational modification Phosphoserine. Basic and acidic residues-rich tracts occupy residues 217-232 (KRVE…EKSQ) and 310-331 (NKDK…EEAF). A compositionally biased stretch (polar residues) spans 338 to 349 (AARSSAQLSDGN). Composition is skewed to low complexity over residues 373 to 382 (SSSATSVSAV) and 434 to 444 (DPAVPAQQPAD). Phosphothreonine is present on Thr-447. Residues 448 to 458 (PERQSSPSGSE) show a composition bias toward polar residues. Residues Ser-453 and Ser-465 each carry the phosphoserine modification. A compositionally biased stretch (polar residues) spans 504–524 (PTQQPADPSTPEQQNSPSGSE). An LIM zinc-binding domain is found at 627–689 (GICTYCNREI…HCGKCYEKLF (63 aa)).

As to expression, expressed in placenta, pancreas and kidney. Also expressed in prostate, testis, ovary and blood.

The protein localises to the cytoplasm. The protein resides in the cytoskeleton. It is found in the cell junction. It localises to the focal adhesion. Its function is as follows. May be involved in the regulation of cellular proliferation and/or differentiation. The protein is Zinc finger protein 185 (ZNF185) of Homo sapiens (Human).